We begin with the raw amino-acid sequence, 147 residues long: Hemoglobin subunit gamma-1 (147 aa).

At G2 the chain carries N-acetylglycine. The Globin domain maps to 3–147; the sequence is HFTEEDKATI…VASALSSRYH (145 aa). Position 13 is a phosphothreonine (T13). S45, S51, and S53 each carry phosphoserine. K60 carries the N6-acetyllysine modification. H64 contacts heme b. The residue at position 83 (K83) is an N6-acetyllysine. H93 contacts heme b. S-nitrosocysteine is present on C94. The residue at position 140 (S140) is a Phosphoserine.

The protein belongs to the globin family. Heterotetramer of two alpha chains and two gamma chains in fetal hemoglobin (Hb F). Red blood cells.

In terms of biological role, gamma chains make up the fetal hemoglobin F, in combination with alpha chains. This is Hemoglobin subunit gamma-1 (HBG1) from Gorilla gorilla gorilla (Western lowland gorilla).